Here is a 707-residue protein sequence, read N- to C-terminus: E3 ubiquitin-protein ligase Praja-2 (707 aa).

The segment covering 1–10 (MSQYTEKEPS) has biased composition (basic and acidic residues). Disordered stretches follow at residues 1–32 (MSQY…QTIT), 72–120 (PKEN…PSIA), and 250–314 (QNGQ…VRPK). The residue at position 2 (serine 2) is an N-acetylserine. Polar residues-rich tracts occupy residues 74 to 83 (ENTSGSSSLD) and 109 to 119 (LNQSTESSPSI). Residues 257–276 (RSSEDGVVRKRRQDDTDQGR) are compositionally biased toward basic and acidic residues. Over residues 293 to 308 (EQNTSDRANHHGSSPE) the composition is skewed to polar residues. A phosphoserine mark is found at serine 306 and serine 320. Residue serine 339 is modified to Phosphoserine; by PKA. Disordered regions lie at residues 379–405 (RVTQ…QESR) and 424–493 (EDSS…QTSL). Positions 381-390 (TQRETERNRV) are enriched in basic and acidic residues. Residue threonine 385 is modified to Phosphothreonine; by PKA. Residues 391-401 (TSENGATASGR) are compositionally biased toward polar residues. Serine 430 carries the phosphoserine modification. The segment covering 465-481 (NDPELQSDSSGPEEENQ) has biased composition (acidic residues). The span at 482–491 (ELSLQEGEQT) shows a compositional bias: polar residues. Positions 530–707 (DGNNNLEDDS…PANDNAEEAP (178 aa)) are interaction with PRKAR1A, PRKAR2A and PRKAR2B. Residues 549–569 (WSLFDGFADGLGVAEAISYVD) are mediates interaction with TBC1D31. The RING-type; atypical zinc finger occupies 633–674 (CPICCSEYIKDDIATELPCHHFFHKPCVSIWLQKSGTCPVCR). The span at 685-701 (SAAASSDPDPDASPAND) shows a compositional bias: low complexity. The interval 685–707 (SAAASSDPDPDASPANDNAEEAP) is disordered.

As to quaternary structure, binds ubiquitin-conjugating enzymes (E2s). In vitro, interacts with the ubiquitin-conjugating enzyme, UBE2D2. The phosphorylated form interacts with PRKAR1A, PRKAR2A and PRKAR2B. Binds the catalytic subunits of cAMP-dependent protein kinase. Interacts with MFHAS1. Interacts with TBC1D31; the interaction is direct and recruits PJA2 to centrosomes.

The protein localises to the cytoplasm. It is found in the cell membrane. Its subcellular location is the endoplasmic reticulum membrane. It localises to the golgi apparatus membrane. The protein resides in the synapse. The protein localises to the postsynaptic density. It is found in the cytoskeleton. Its subcellular location is the microtubule organizing center. It localises to the centrosome. The enzyme catalyses S-ubiquitinyl-[E2 ubiquitin-conjugating enzyme]-L-cysteine + [acceptor protein]-L-lysine = [E2 ubiquitin-conjugating enzyme]-L-cysteine + N(6)-ubiquitinyl-[acceptor protein]-L-lysine.. Its pathway is protein modification; protein ubiquitination. Functionally, has E2-dependent E3 ubiquitin-protein ligase activity. Responsible for ubiquitination of cAMP-dependent protein kinase type I and type II-alpha/beta regulatory subunits and for targeting them for proteasomal degradation. Essential for PKA-mediated long-term memory processes. Through the ubiquitination of MFHAS1, positively regulates the TLR2 signaling pathway that leads to the activation of the downstream p38 and JNK MAP kinases and promotes the polarization of macrophages toward the pro-inflammatory M1 phenotype. Plays a role in ciliogenesis by ubiquitinating OFD1. The polypeptide is E3 ubiquitin-protein ligase Praja-2 (Pja2) (Mus musculus (Mouse)).